The sequence spans 388 residues: Protein TsgA homolog (388 aa).

Transmembrane regions (helical) follow at residues 11-31, 50-70, 77-97, 101-121, 133-153, 160-180, 206-226, 244-264, 268-288, 298-318, 332-352, and 360-380; these read WISF…GMIM, TFLN…IEII, IFSF…NSIF, INMF…TFII, LLLL…IVTA, IIWY…FLLT, VFLL…FISW, SLVS…SFII, NLYR…YCFI, YIII…ITLA, LILL…SPIV, and TLIS…LIYF.

This sequence belongs to the major facilitator superfamily. TsgA family.

It localises to the cell membrane. This is Protein TsgA homolog from Buchnera aphidicola subsp. Acyrthosiphon pisum (strain Tuc7).